The sequence spans 499 residues: Ribulose bisphosphate carboxylase large chain (499 aa).

Substrate contacts are provided by Asn139 and Thr189. The active-site Proton acceptor is the Lys191. Lys193 contacts substrate. Mg(2+) is bound by residues Lys217, Asp219, and Glu220. Lys217 is subject to N6-carboxylysine. His309 (proton acceptor) is an active-site residue. Residues Arg310, His342, and Ser394 each coordinate substrate.

Belongs to the RuBisCO large chain family. Type I subfamily. Heterohexadecamer of 8 large chains and 8 small chains. Requires Mg(2+) as cofactor.

It catalyses the reaction 2 (2R)-3-phosphoglycerate + 2 H(+) = D-ribulose 1,5-bisphosphate + CO2 + H2O. The enzyme catalyses D-ribulose 1,5-bisphosphate + O2 = 2-phosphoglycolate + (2R)-3-phosphoglycerate + 2 H(+). In terms of biological role, ruBisCO catalyzes two reactions: the carboxylation of D-ribulose 1,5-bisphosphate, the primary event in carbon dioxide fixation, as well as the oxidative fragmentation of the pentose substrate. Both reactions occur simultaneously and in competition at the same active site. The sequence is that of Ribulose bisphosphate carboxylase large chain from Paraburkholderia xenovorans (strain LB400).